A 428-amino-acid chain; its full sequence is MSPIWSNWPGEQVCAPSAIVRPTSEAELADVIAQAAKRGERVRAVGSGHSFTDIACTDGVMIDMTGLQRVLDVDQPTGLVTVEGGAKLRALGPQLAQRRLGLENQGDVDPQSITGATATATHGTGVRFQNLSARIVSLRLVTAGGEVLSLSEGDDYLAARVSLGALGVISQVTLQTVPLFTLHRHDQRRSLAQTLERLDEFVDGNDHFEFFVFPYADKALTRTMHRSDEQPKPTPGWQRMVGENFENGGLSLICQTGRRFPSVAPRLNRLMTNMMSSSTVQDRAYKVFATQRKVRFTEMEYAIPRENGREALQRVIDLVRRRSLPIMFPIEVRFSAPDDSFLSTAYGRDTCYIAVHQYAGMEFESYFRAVEEIMDDYAGRPHWGKRHYQTAATLRERYPQWDRFAAVRDRLDPDRVFLNDYTRRVLGP.

An FAD-binding PCMH-type domain is found at 12–179; it reads QVCAPSAIVR…SQVTLQTVPL (168 aa).

The protein belongs to the oxygen-dependent FAD-linked oxidoreductase family. A divalent metal cation is required as a cofactor.

It carries out the reaction L-gulono-1,4-lactone + 2 Fe(III)-[cytochrome c] = L-ascorbate + 2 Fe(II)-[cytochrome c] + 3 H(+). It functions in the pathway cofactor biosynthesis; L-ascorbate biosynthesis. In terms of biological role, oxidizes L-gulono-1,4-lactone to L-xylo-hexulonolactone which spontaneously isomerizes to L-ascorbate. This is L-gulono-1,4-lactone dehydrogenase from Mycobacterium tuberculosis (strain CDC 1551 / Oshkosh).